The sequence spans 472 residues: 3-isopropylmalate dehydratase large subunit (472 aa).

[4Fe-4S] cluster-binding residues include C346, C406, and C409.

It belongs to the aconitase/IPM isomerase family. LeuC type 1 subfamily. In terms of assembly, heterodimer of LeuC and LeuD. [4Fe-4S] cluster serves as cofactor.

The catalysed reaction is (2R,3S)-3-isopropylmalate = (2S)-2-isopropylmalate. It functions in the pathway amino-acid biosynthesis; L-leucine biosynthesis; L-leucine from 3-methyl-2-oxobutanoate: step 2/4. Its function is as follows. Catalyzes the isomerization between 2-isopropylmalate and 3-isopropylmalate, via the formation of 2-isopropylmaleate. This chain is 3-isopropylmalate dehydratase large subunit, found in Thermus thermophilus (strain ATCC BAA-163 / DSM 7039 / HB27).